We begin with the raw amino-acid sequence, 346 residues long: MLTDRELLILEEIVREYTENGQPIGSKTLMNNLPVKVSSATIRNDMAKLEEMGLIEKMHSSSGRIPSLMGYRYYVDHLLSPKKLNQSEAQQIQKGLGMHFREVDDIVRTSAEMLSNLTHYTALTLKPDQKDATLDGFRMVPLGGNQVMLILVSSNGDVTSQQFSIPRGMNSETVERVLRIMNDRLIGETLDQVYYHLKTDIPKIVEHYLHSNDGIIDIFENVVAQSSQDRYFIGGKLNILNFSKNVDVSSIRGLLTLFNENDQLDGLLGNNQSDLDVKIGDELSNALLKDFSLITATYDVGSRGKGLIAILGPTSMQYSKTLGLLDTFRDQLSNRMLEYYKHLDDS.

The protein belongs to the HrcA family.

Negative regulator of class I heat shock genes (grpE-dnaK-dnaJ and groELS operons). Prevents heat-shock induction of these operons. In Pediococcus pentosaceus (strain ATCC 25745 / CCUG 21536 / LMG 10740 / 183-1w), this protein is Heat-inducible transcription repressor HrcA.